The sequence spans 626 residues: Interferon-induced GTP-binding protein MxC (626 aa).

The Dynamin-type G domain maps to 40–313 (DLNLPAIAVI…LVEHIAKNVP (274 aa)). The interval 50 to 57 (GDQSSGKS) is G1 motif. 50–57 (GDQSSGKS) provides a ligand contact to GTP. The G2 motif stretch occupies residues 75–77 (VTR). A G3 motif region spans residues 151 to 154 (DLPG). GTP contacts are provided by residues 151 to 155 (DLPGI) and 220 to 223 (TKPD). Positions 220-223 (TKPD) are G4 motif. Residues 252–255 (KCRG) are G5 motif. The 91-residue stretch at 534 to 624 (LRETAFHLTS…ALPKVVHSAN (91 aa)) folds into the GED domain.

The protein belongs to the TRAFAC class dynamin-like GTPase superfamily. Dynamin/Fzo/YdjA family.

Its subcellular location is the cytoplasm. The protein is Interferon-induced GTP-binding protein MxC (mxc) of Danio rerio (Zebrafish).